The chain runs to 203 residues: Sec-independent protein translocase protein TatB (203 aa).

A helical transmembrane segment spans residues methionine 1–glycine 21. A disordered region spans residues lysine 179 to alanine 203.

This sequence belongs to the TatB family. In terms of assembly, the Tat system comprises two distinct complexes: a TatABC complex, containing multiple copies of TatA, TatB and TatC subunits, and a separate TatA complex, containing only TatA subunits. Substrates initially bind to the TatABC complex, which probably triggers association of the separate TatA complex to form the active translocon.

The protein resides in the cell inner membrane. Functionally, part of the twin-arginine translocation (Tat) system that transports large folded proteins containing a characteristic twin-arginine motif in their signal peptide across membranes. Together with TatC, TatB is part of a receptor directly interacting with Tat signal peptides. TatB may form an oligomeric binding site that transiently accommodates folded Tat precursor proteins before their translocation. In Rhizobium johnstonii (strain DSM 114642 / LMG 32736 / 3841) (Rhizobium leguminosarum bv. viciae), this protein is Sec-independent protein translocase protein TatB.